A 69-amino-acid polypeptide reads, in one-letter code: MTKLALLLIRFYQRFISPGLPPACRFYPTCSEYGYEAISRYGIIKGGVLTVRRLLRCHPFHPGGYDPVP.

Belongs to the UPF0161 family.

The protein localises to the cell membrane. In terms of biological role, could be involved in insertion of integral membrane proteins into the membrane. This is Putative membrane protein insertion efficiency factor from Thermomicrobium roseum (strain ATCC 27502 / DSM 5159 / P-2).